Reading from the N-terminus, the 368-residue chain is Transcription factor bHLH30 (368 aa).

The stretch at Ala3–Phe30 forms a coiled coil. The 50-residue stretch at Ala173–Leu222 folds into the bHLH domain. Residues Lys333–Arg368 form a disordered region. Over residues Glu337–Arg368 the composition is skewed to polar residues.

In terms of assembly, homodimer. Interacts with LHW.

It is found in the nucleus. This chain is Transcription factor bHLH30 (BHLH30), found in Arabidopsis thaliana (Mouse-ear cress).